The chain runs to 318 residues: Pyrimidine-specific ribonucleoside hydrolase RihA (318 aa).

His240 is a catalytic residue.

It belongs to the IUNH family. RihA subfamily.

Functionally, hydrolyzes cytidine or uridine to ribose and cytosine or uracil, respectively. The chain is Pyrimidine-specific ribonucleoside hydrolase RihA from Shewanella sp. (strain ANA-3).